A 466-amino-acid polypeptide reads, in one-letter code: MSLSLWQHCLARLQDELPATEFSMWIRPLQAELSDNTLALYAPNRFVLDWVREKYINNINALLVDFCGSDVPSLRFEVGNKPVSARTTESVPKTVTHPAVNSTPTNSQPVRPSWDNQPQSQLPELNYRSNVNPKHKFDNFVEGKSNQLARAAARQVADNPGGAYNPLFLYGGTGLGKTHLLHAVGNSIMERKANAKVVYMHSERFVQDMVKALQNNAIEDFKRYYRSVDALLIDDIQFFANKERSQEEFFHTFNALLEGNQQIILTSDRYPKEINGVEDRLKSRFGWGLTVAIEPPELETRVAILMKKADENQIQLPDEVAFFIAKRLRSNVRELEGALNRVIANANFTGRAITIDFVREALRDLLALQEKLVTIDNIQKTVAEYYKIKVADLLSKRRSRSVARPRQMAMALAKELTNHSLPEIGDAFGGRDHTTVLHACRKIEQLREESHDIKEDFSNLIRTLSS.

The domain I, interacts with DnaA modulators stretch occupies residues 1-85 (MSLSLWQHCL…FEVGNKPVSA (85 aa)). Positions 82-122 (PVSARTTESVPKTVTHPAVNSTPTNSQPVRPSWDNQPQSQL) are disordered. A compositionally biased stretch (polar residues) spans 85 to 122 (ARTTESVPKTVTHPAVNSTPTNSQPVRPSWDNQPQSQL). A domain II region spans residues 85-129 (ARTTESVPKTVTHPAVNSTPTNSQPVRPSWDNQPQSQLPELNYRS). Residues 130-346 (NVNPKHKFDN…GALNRVIANA (217 aa)) form a domain III, AAA+ region region. ATP contacts are provided by Gly174, Gly176, Lys177, and Thr178. Residues 347-466 (NFTGRAITID…FSNLIRTLSS (120 aa)) are domain IV, binds dsDNA.

The protein belongs to the DnaA family. Oligomerizes as a right-handed, spiral filament on DNA at oriC.

It is found in the cytoplasm. Functionally, plays an essential role in the initiation and regulation of chromosomal replication. ATP-DnaA binds to the origin of replication (oriC) to initiate formation of the DNA replication initiation complex once per cell cycle. Binds the DnaA box (a 9 base pair repeat at the origin) and separates the double-stranded (ds)DNA. Forms a right-handed helical filament on oriC DNA; dsDNA binds to the exterior of the filament while single-stranded (ss)DNA is stabiized in the filament's interior. The ATP-DnaA-oriC complex binds and stabilizes one strand of the AT-rich DNA unwinding element (DUE), permitting loading of DNA polymerase. After initiation quickly degrades to an ADP-DnaA complex that is not apt for DNA replication. Binds acidic phospholipids. The sequence is that of Chromosomal replication initiator protein DnaA from Proteus mirabilis (strain HI4320).